A 227-amino-acid chain; its full sequence is Protein rapunzel (227 aa).

The chain crosses the membrane as a helical span at residues 179 to 196; it reads LAYLFCIGFIALMGYYGI.

It localises to the membrane. This Danio rerio (Zebrafish) protein is Protein rapunzel.